A 284-amino-acid polypeptide reads, in one-letter code: Bifunctional protein FolD (284 aa).

NADP(+)-binding positions include 166–168 (GAS) and isoleucine 232.

Belongs to the tetrahydrofolate dehydrogenase/cyclohydrolase family. As to quaternary structure, homodimer.

The catalysed reaction is (6R)-5,10-methylene-5,6,7,8-tetrahydrofolate + NADP(+) = (6R)-5,10-methenyltetrahydrofolate + NADPH. The enzyme catalyses (6R)-5,10-methenyltetrahydrofolate + H2O = (6R)-10-formyltetrahydrofolate + H(+). Its pathway is one-carbon metabolism; tetrahydrofolate interconversion. Its function is as follows. Catalyzes the oxidation of 5,10-methylenetetrahydrofolate to 5,10-methenyltetrahydrofolate and then the hydrolysis of 5,10-methenyltetrahydrofolate to 10-formyltetrahydrofolate. This is Bifunctional protein FolD from Shewanella baltica (strain OS223).